We begin with the raw amino-acid sequence, 32 residues long: DQDEGVSTEPTQVGPAELHNDETCVGPLVYRN.

Positions 1–32 are disordered; the sequence is DQDEGVSTEPTQVGPAELHNDETCVGPLVYRN. Residue Thr-11 is glycosylated (O-linked (GalNAc...) threonine). Positions 19–32 constitute a Fibronectin type-II domain; it reads HNDETCVGPLVYRN.

It belongs to the seminal plasma protein family. Homodimer.

It localises to the secreted. In terms of biological role, could enhance the fertilizing capacity of bull spermatozoa upon interaction with heparin-like glycosaminoglycans present in the female genital tract. Exhibits both simulatory and inhibitory actions on the release of pituitary gonadotropins. Binds to heparin and gelatin. The polypeptide is Seminal plasma protein PDC-109 (Bos indicus (Zebu)).